A 218-amino-acid chain; its full sequence is Sodium channel regulatory subunit beta-1 (218 aa).

Positions 1 to 18 (MGTLLALVVGAVLVSSAW) are cleaved as a signal peptide. Over 19–157 (GGCVEVDSET…DKANRDMASI (139 aa)) the chain is Extracellular. Disulfide bonds link C21/C43 and C40/C121. Residues 22 to 150 (VEVDSETEAV…KIHLEVVDKA (129 aa)) form the Ig-like C2-type domain. N-linked (GlcNAc...) asparagine glycans are attached at residues N93, N110, N114, and N135. The helical transmembrane segment at 158 to 179 (VSEIMMYVLIVVLTIWLVAEMV) threads the bilayer. Residues 180 to 218 (YCYKKIAAATEAAAQENASEYLAITSESKENCTGVQVAE) lie on the Cytoplasmic side of the membrane.

The protein belongs to the sodium channel auxiliary subunit SCN1B (TC 8.A.17) family. As to quaternary structure, a voltage-gated sodium (Nav) channel consists of an ion-conducting pore-forming alpha subunit functional on its own that is regulated by one or more beta subunits. Interacts with SCN1A; regulatory subunit of SCN1A/Nav1.1. Interacts with SCN3A; regulatory subunit of SCN3A/Nav1.3. Interacts with SCN4A; regulatory subunit of SCN4A/Nav1.4. Interacts with SCN5A; regulatory subunit of SCN5A/Nav1.5. Interacts with SCN8A; regulatory subunit of SCN8A/Nav1.6. Interacts with SCN9A; regulatory subunit of SCN9A/Nav1.7. Interacts with SCN10A; regulatory subunit of SCN10A/Nav1.8. Interacts with NFASC. Interacts with TMEM65. As to expression, detected in brain (at protein level). Expressed in brain, heart, skeletal muscle and spinal cord.

The protein resides in the cell membrane. Its subcellular location is the perikaryon. It localises to the cell projection. It is found in the axon. Its function is as follows. Regulatory subunit of multiple voltage-gated sodium (Nav) channels directly mediating the depolarization of excitable membranes. Navs, also called VGSCs (voltage-gated sodium channels) or VDSCs (voltage-dependent sodium channels), operate by switching between closed and open conformations depending on the voltage difference across the membrane. In the open conformation they allow Na(+) ions to selectively pass through the pore, along their electrochemical gradient. The influx of Na+ ions provokes membrane depolarization, initiating the propagation of electrical signals throughout cells and tissues. The accessory beta subunits participate in localization and functional modulation of the Nav channels. Modulates the activity of SCN1A/Nav1.1, SCN2A/Nav1.2, SCN3A/Nav1.3, SCN4A/Nav1.4, SCN5A/Nav1.5, SCN8A/Nav1.6, SCN9A/Nav1.7 and SCN10A/Nav1.8. This Rattus norvegicus (Rat) protein is Sodium channel regulatory subunit beta-1.